We begin with the raw amino-acid sequence, 201 residues long: Ras-related protein Rab-1B (201 aa).

Met1 is modified (N-acetylmethionine). GTP-binding residues include Ser17, Gly18, Val19, Gly20, Lys21, Ser22, Cys23, Tyr33, Thr34, Glu35, Ser36, Ser39, and Thr40. Residue Ser22 coordinates Mg(2+). A Switch 1 motif is present at residues 30-45 (DDTYTESYISTIGVDF). Mg(2+)-binding residues include Thr40 and Asp63. The interval 64-83 (TAGQERFRTITSSYYRGAHG) is switch 2 region; required for interaction with REP1/CHM. A Switch 2 motif is present at residues 65–80 (AGQERFRTITSSYYRG). Gly66 is a GTP binding site. A (Microbial infection) O-(2-cholinephosphoryl)serine modification is found at Ser76. Tyr77 carries the (Microbial infection) O-AMP-tyrosine modification. Residues Asn121, Lys122, Asp124, Ser151, Ala152, and Lys153 each contribute to the GTP site. The segment at 174–201 (GPGAASGGERPNLKIDSTPVKPAGGGCC) is disordered. Residues Cys200 and Cys201 are each lipidated (S-geranylgeranyl cysteine). The residue at position 201 (Cys201) is a Cysteine methyl ester.

This sequence belongs to the small GTPase superfamily. Rab family. In terms of assembly, interacts with MICAL1 and MICAL2. Interacts (in GTP-bound form) with MICALCL, MICAL1 and MILCAL3. Interacts with GDI1; the interaction requires the GDP-bound state. Interacts with CHM/REP1; the interaction requires the GDP-bound form and is necessary for prenylation by GGTase II. Interacts with RabGAP TBC1D20. Interacts (in GDP-bound form) with lipid phosphatase MTMR6 (via GRAM domain); the interaction regulates MTMR6 recruitment to the endoplasmic reticulum-Golgi intermediate compartment. Interacts (in GDP-bound form) with lipid phosphatase MTMR7. As to quaternary structure, (Microbial infection) Interacts with L.pneumophila AnkX. Interacts with L.pneumophila Lem3. Interacts with L.pneumophila SidD. Interacts with L.pneumophila DrrA. Mg(2+) serves as cofactor. Prenylated; by GGTase II, only after interaction of the substrate with Rab escort protein 1 (REP1). Post-translationally, (Microbial infection) AMPylation at Tyr-77 by L.pneumophila DrrA occurs in the switch 2 region and leads to moderate inactivation of the GTPase activity. It appears to prolong the lifetime of the GTP state of RAB1B by restricting access of GTPase effectors to switch 2 and blocking effector-stimulated GTP hydrolysis, thereby rendering RAB1B constitutively active. It is later de-AMPylated by L.pneumophila SidD, releasing RAB1B from bacterial phagosomes. In terms of processing, (Microbial infection) Phosphocholinated at Ser-76 by L.pneumophila AnkX, leading to displace GDP dissociation inhibitors (GDI). Both GDP-bound and GTP-bound forms can be phosphocholinated. Dephosphocholinated by L.pneumophila Lem3, restoring accessibility to L.pneumophila GTPase effector LepB. (Microbial infection) Glycosylated by S.typhimurium protein Ssek3: arginine GlcNAcylation prevents GTPase activity, thereby disrupting vesicular protein transport from the endoplasmic reticulum (ER) to the Golgi compartment.

Its subcellular location is the cytoplasm. The protein localises to the membrane. It is found in the preautophagosomal structure membrane. The protein resides in the perinuclear region. It catalyses the reaction GTP + H2O = GDP + phosphate + H(+). Its activity is regulated as follows. Regulated by guanine nucleotide exchange factors (GEFs) which promote the exchange of bound GDP for free GTP. Regulated by GTPase activating proteins (GAPs) including TBC1D20 which increases the GTP hydrolysis activity. Inhibited by GDP dissociation inhibitors (GDIs). In terms of biological role, the small GTPases Rab are key regulators of intracellular membrane trafficking, from the formation of transport vesicles to their fusion with membranes. Rabs cycle between an inactive GDP-bound form and an active GTP-bound form that is able to recruit to membranes different set of downstream effectors directly responsible for vesicle formation, movement, tethering and fusion. Plays a role in the initial events of the autophagic vacuole development which take place at specialized regions of the endoplasmic reticulum. Regulates vesicular transport between the endoplasmic reticulum and successive Golgi compartments. Required to modulate the compacted morphology of the Golgi. Promotes the recruitment of lipid phosphatase MTMR6 to the endoplasmic reticulum-Golgi intermediate compartment. This Homo sapiens (Human) protein is Ras-related protein Rab-1B.